The primary structure comprises 294 residues: Casein kinase II subunit beta (294 aa).

Disordered stretches follow at residues 66 to 90 and 269 to 294; these read DHNT…SKRN and KRME…MASE. The span at 70–87 shows a compositional bias: low complexity; it reads DNTTTNTSNNNDSRNGTS. Positions 273–288 are enriched in acidic residues; the sequence is EDDEEEEDEVEEEDDD.

It belongs to the casein kinase 2 subunit beta family. Tetramer composed of two alpha chains, one beta chain and one beta' chain. In terms of processing, phosphorylated by alpha subunit.

Its function is as follows. Regulatory subunit of casein kinase II/CK2. As part of the kinase complex regulates the basal catalytic activity of the alpha subunit a constitutively active serine/threonine-protein kinase that phosphorylates a large number of substrates containing acidic residues C-terminal to the phosphorylated serine or threonine. This chain is Casein kinase II subunit beta (CKB1), found in Candida albicans (Yeast).